Reading from the N-terminus, the 306-residue chain is Methionyl-tRNA formyltransferase (306 aa).

Residue 105–108 (SLLP) participates in (6S)-5,6,7,8-tetrahydrofolate binding.

This sequence belongs to the Fmt family.

It catalyses the reaction L-methionyl-tRNA(fMet) + (6R)-10-formyltetrahydrofolate = N-formyl-L-methionyl-tRNA(fMet) + (6S)-5,6,7,8-tetrahydrofolate + H(+). Its function is as follows. Attaches a formyl group to the free amino group of methionyl-tRNA(fMet). The formyl group appears to play a dual role in the initiator identity of N-formylmethionyl-tRNA by promoting its recognition by IF2 and preventing the misappropriation of this tRNA by the elongation apparatus. In Rubrobacter xylanophilus (strain DSM 9941 / JCM 11954 / NBRC 16129 / PRD-1), this protein is Methionyl-tRNA formyltransferase.